The chain runs to 505 residues: Cobyric acid synthase (505 aa).

The GATase cobBQ-type domain occupies 251–444 (DIDVAVIKLP…IHGIFDNSEF (194 aa)). Cys332 functions as the Nucleophile in the catalytic mechanism. The active site involves His436.

The protein belongs to the CobB/CobQ family. CobQ subfamily.

Its pathway is cofactor biosynthesis; adenosylcobalamin biosynthesis. In terms of biological role, catalyzes amidations at positions B, D, E, and G on adenosylcobyrinic A,C-diamide. NH(2) groups are provided by glutamine, and one molecule of ATP is hydrogenolyzed for each amidation. The sequence is that of Cobyric acid synthase from Clostridium novyi (strain NT).